Reading from the N-terminus, the 598-residue chain is Elongation factor 4 (598 aa).

Residues 2-184 (DHIRNFSIIA…AIVKRVPPPR (183 aa)) enclose the tr-type G domain. Residues 14–19 (DHGKST) and 131–134 (NKID) each bind GTP.

Belongs to the TRAFAC class translation factor GTPase superfamily. Classic translation factor GTPase family. LepA subfamily.

The protein resides in the cell inner membrane. The catalysed reaction is GTP + H2O = GDP + phosphate + H(+). Functionally, required for accurate and efficient protein synthesis under certain stress conditions. May act as a fidelity factor of the translation reaction, by catalyzing a one-codon backward translocation of tRNAs on improperly translocated ribosomes. Back-translocation proceeds from a post-translocation (POST) complex to a pre-translocation (PRE) complex, thus giving elongation factor G a second chance to translocate the tRNAs correctly. Binds to ribosomes in a GTP-dependent manner. This is Elongation factor 4 from Syntrophus aciditrophicus (strain SB).